We begin with the raw amino-acid sequence, 261 residues long: Trifolitoxin immunity protein (261 aa).

In terms of biological role, required for TFX resistance. This is Trifolitoxin immunity protein (tfxG) from Rhizobium leguminosarum bv. trifolii.